The chain runs to 357 residues: MSSVLTDLLNLDLSDVTEKVIAEYIWIGGSGMDMRSKARSLSGPVSSVKELPKWNYDGSSTGQAQGHDSEVILYPQAIFRDPFRRGKHILVICDAYSPNGTAIPSNKRAAAAKIFNEKAVSDEETWYGLEQEYTLLQKDVKWPLGWPIGGYPGPQGPYYCGVGADKAWGRDIVDAHYKACLYSGINISGINGEVMPGQWEFQVGPSVGISAADELWCARFIMERITEKAGVVLSFDPKPIEGDWNGAGCHTNYSTKSMRKEGGFEVIKKAIEKLKLRHKEHISAYGEGNERRLTGRHETADMNTFSWGVANRGASVRVGRDTEKEGKGYFEDRRPASNMDPYIVTSMIAETTILWKP.

A GS beta-grasp domain is found at 20-100 (VIAEYIWIGG…VICDAYSPNG (81 aa)). Positions 107–357 (KRAAAAKIFN…IAETTILWKP (251 aa)) constitute a GS catalytic domain.

The protein belongs to the glutamine synthetase family. In terms of assembly, homooctamer.

It is found in the cytoplasm. The catalysed reaction is L-glutamate + NH4(+) + ATP = L-glutamine + ADP + phosphate + H(+). This is Glutamine synthetase cytosolic isozyme from Pinus sylvestris (Scotch pine).